Consider the following 492-residue polypeptide: Probable cobyric acid synthase (492 aa).

The 193-residue stretch at 252-444 (PIEVNIVKFS…FHGILENFEF (193 aa)) folds into the GATase cobBQ-type domain. Cys330 (nucleophile) is an active-site residue. His436 is a catalytic residue.

It belongs to the CobB/CobQ family. CobQ subfamily.

It functions in the pathway cofactor biosynthesis; adenosylcobalamin biosynthesis. Functionally, catalyzes amidations at positions B, D, E, and G on adenosylcobyrinic A,C-diamide. NH(2) groups are provided by glutamine, and one molecule of ATP is hydrogenolyzed for each amidation. This chain is Probable cobyric acid synthase, found in Methanococcus maripaludis (strain C7 / ATCC BAA-1331).